We begin with the raw amino-acid sequence, 614 residues long: NEDD8 ultimate buster 1 (614 aa).

Coiled coils occupy residues L36 to G71 and N151 to D206. 3 UBA domains span residues Y373–R413, E423–N469, and S488–H528. Residues R413–R430 carry the Nuclear localization signal motif. Residues E426 to W473 are NEDD8-binding 1. The tract at residues S531 to L590 is disordered. The segment covering S539–S561 has biased composition (low complexity). An NEDD8-binding 2 region spans residues T549–I597. Over residues T562 to L590 the composition is skewed to acidic residues.

In terms of assembly, directly interacts with NEDD8 and PSMD4/S5a, a member of the regulatory subunit of the 26S proteasome. Interacts with AIPL1. The interaction with UBD via UBA domains facilitates the linking of UBD-conjugated target protein to the proteasome complex and accelerates UBD degradation and that of its conjugates.

It is found in the nucleus. In terms of biological role, specific down-regulator of the NEDD8 conjugation system. Recruits NEDD8, UBD, and their conjugates to the proteasome for degradation. This is NEDD8 ultimate buster 1 (Nub1) from Mus musculus (Mouse).